We begin with the raw amino-acid sequence, 1501 residues long: 1-phosphatidylinositol 4,5-bisphosphate phosphodiesterase eta-2 (1501 aa).

The interval 28 to 47 is disordered; that stretch reads RGFSGLQGGRRRGRGEKGIP. The interval 75–229 is necessary for plasma membrane localization; it reads MPGPQPSAAS…WVTGLRYLMA (155 aa). The PH domain occupies 121 to 229; that stretch reads SAMQEGTQMV…WVTGLRYLMA (109 aa). 2 consecutive EF-hand domains span residues 243–278 and 279–315; these read TRDQ…LNVN and LPRQ…MSTR. The Ca(2+) site is built by aspartate 256, asparagine 258, aspartate 260, serine 262, and glutamate 267. Residues 400–545 enclose the PI-PLC X-box domain; sequence QDMTQPLSHY…LKGKILVKGK (146 aa). Residue histidine 415 is part of the active site. Residues asparagine 416, glutamate 445, and aspartate 447 each coordinate Ca(2+). Residue histidine 459 is part of the active site. Glutamate 494 is a binding site for Ca(2+). Substrate contacts are provided by lysine 543 and lysine 545. Disordered stretches follow at residues 551-570 and 609-700; these read ISED…DEME and DPND…QKKT. Residues 553–570 show a composition bias toward acidic residues; it reads EDAEEGEVSDEDSADEME. 2 positions are modified to phosphoserine: serine 561 and serine 565. The segment covering 626 to 638 has biased composition (basic and acidic residues); it reads RKAEAKKGQSKVE. Positions 662–673 are enriched in basic residues; sequence SKRKKKGSKIKK. Phosphoserine is present on residues serine 676 and serine 686. The region spanning 707–821 is the PI-PLC Y-box domain; the sequence is LSDLVKYTKS…GYVLKPQCMC (115 aa). Substrate is bound by residues serine 734 and arginine 761. A C2 domain is found at 821–950; sequence CQGVFNPNSE…PGYRHVYLEG (130 aa). Positions 865, 867, 891, 920, 921, and 922 each coordinate Ca(2+). Disordered stretches follow at residues 986–1073, 1089–1238, 1273–1305, and 1398–1469; these read GSLD…RLFP, EEPA…SSND, SAAR…DELQ, and GDIT…GACS. A compositionally biased stretch (low complexity) spans 1089–1107; that stretch reads EEPALGPGLPLQAAAPTGP. Composition is skewed to basic and acidic residues over residues 1142–1151 and 1215–1227; these read GGRENEEPPL and LWQR…HRDS. Residues 1421–1439 are compositionally biased toward low complexity; that stretch reads RRSSSRSQSRVRAIASRAR. Positions 1440-1463 are enriched in basic and acidic residues; sequence QAQERQQRLRGQDSRGPPEEERGT.

Requires Ca(2+) as cofactor. Specifically detected in the brain, with higher level in cerebral cortex, olfactory bulb and hippocampus (at protein level). Expressed in the pyramidal cells of the hippocampus, but also in eye and lung.

It is found in the cytoplasm. The protein resides in the cell membrane. The enzyme catalyses a 1,2-diacyl-sn-glycero-3-phospho-(1D-myo-inositol-4,5-bisphosphate) + H2O = 1D-myo-inositol 1,4,5-trisphosphate + a 1,2-diacyl-sn-glycerol + H(+). Activity is stimulated by GNB1:GNG2. Functionally, the production of the second messenger molecules diacylglycerol (DAG) and inositol 1,4,5-trisphosphate (IP3) is mediated by activated phosphatidylinositol-specific phospholipase C enzymes. This phospholipase activity is very sensitive to calcium. May be important for formation and maintenance of the neuronal network in the postnatal brain. The chain is 1-phosphatidylinositol 4,5-bisphosphate phosphodiesterase eta-2 from Mus musculus (Mouse).